Reading from the N-terminus, the 177-residue chain is Probable inosine/xanthosine triphosphatase (177 aa).

Belongs to the YjjX NTPase family. As to quaternary structure, homodimer. The cofactor is Mg(2+). It depends on Mn(2+) as a cofactor.

The enzyme catalyses XTP + H2O = XDP + phosphate + H(+). It carries out the reaction ITP + H2O = IDP + phosphate + H(+). Functionally, phosphatase that hydrolyzes non-canonical purine nucleotides such as XTP and ITP to their respective diphosphate derivatives. Probably excludes non-canonical purines from DNA/RNA precursor pool, thus preventing their incorporation into DNA/RNA and avoiding chromosomal lesions. This chain is Probable inosine/xanthosine triphosphatase, found in Pyrobaculum islandicum (strain DSM 4184 / JCM 9189 / GEO3).